The primary structure comprises 197 residues: Probable molybdenum cofactor guanylyltransferase (197 aa).

Residues 9–11 (LAG), lysine 21, aspartate 65, and aspartate 94 each bind GTP. Mg(2+) is bound at residue aspartate 94.

The protein belongs to the MobA family. Mg(2+) serves as cofactor.

Its subcellular location is the cytoplasm. The enzyme catalyses Mo-molybdopterin + GTP + H(+) = Mo-molybdopterin guanine dinucleotide + diphosphate. In terms of biological role, transfers a GMP moiety from GTP to Mo-molybdopterin (Mo-MPT) cofactor (Moco or molybdenum cofactor) to form Mo-molybdopterin guanine dinucleotide (Mo-MGD) cofactor. This chain is Probable molybdenum cofactor guanylyltransferase, found in Carboxydothermus hydrogenoformans (strain ATCC BAA-161 / DSM 6008 / Z-2901).